The chain runs to 319 residues: Acetyl-coenzyme A carboxylase carboxyl transferase subunit alpha (319 aa).

A CoA carboxyltransferase C-terminal domain is found at 35 to 296 (NIDEEVHRLR…KAQLLADLAD (262 aa)).

It belongs to the AccA family. In terms of assembly, acetyl-CoA carboxylase is a heterohexamer composed of biotin carboxyl carrier protein (AccB), biotin carboxylase (AccC) and two subunits each of ACCase subunit alpha (AccA) and ACCase subunit beta (AccD).

Its subcellular location is the cytoplasm. The enzyme catalyses N(6)-carboxybiotinyl-L-lysyl-[protein] + acetyl-CoA = N(6)-biotinyl-L-lysyl-[protein] + malonyl-CoA. It functions in the pathway lipid metabolism; malonyl-CoA biosynthesis; malonyl-CoA from acetyl-CoA: step 1/1. Functionally, component of the acetyl coenzyme A carboxylase (ACC) complex. First, biotin carboxylase catalyzes the carboxylation of biotin on its carrier protein (BCCP) and then the CO(2) group is transferred by the carboxyltransferase to acetyl-CoA to form malonyl-CoA. The polypeptide is Acetyl-coenzyme A carboxylase carboxyl transferase subunit alpha (Klebsiella pneumoniae (strain 342)).